Reading from the N-terminus, the 182-residue chain is Ribosome maturation factor RimP (182 aa).

Belongs to the RimP family.

It is found in the cytoplasm. Required for maturation of 30S ribosomal subunits. The chain is Ribosome maturation factor RimP from Chloroherpeton thalassium (strain ATCC 35110 / GB-78).